Reading from the N-terminus, the 559-residue chain is ATP synthase subunit beta-3, mitochondrial (559 aa).

Low complexity predominate over residues 1-28 (MASRRILSSLLRSSSSRSTSKSSLIGSR). The segment at 1–39 (MASRRILSSLLRSSSSRSTSKSSLIGSRNPRLLSPGPAH) is disordered. The N-terminal 54 residues, 1–54 (MASRRILSSLLRSSSSRSTSKSSLIGSRNPRLLSPGPAHGAAPCGTLLGRVAEY), are a transit peptide targeting the mitochondrion. Position 62 is a phosphoserine (Ser62). 234–241 (GGAGVGKT) is a binding site for ATP.

The protein belongs to the ATPase alpha/beta chains family. As to quaternary structure, F-type ATPases have 2 components, CF(1) - the catalytic core - and CF(0) - the membrane proton channel. CF(1) has five subunits: alpha(3), beta(3), gamma(1), delta(1), epsilon(1). CF(0) has three main subunits: a, b and c.

It is found in the mitochondrion. Its subcellular location is the mitochondrion inner membrane. The enzyme catalyses ATP + H2O + 4 H(+)(in) = ADP + phosphate + 5 H(+)(out). Mitochondrial membrane ATP synthase (F(1)F(0) ATP synthase or Complex V) produces ATP from ADP in the presence of a proton gradient across the membrane which is generated by electron transport complexes of the respiratory chain. F-type ATPases consist of two structural domains, F(1) - containing the extramembraneous catalytic core, and F(0) - containing the membrane proton channel, linked together by a central stalk and a peripheral stalk. During catalysis, ATP synthesis in the catalytic domain of F(1) is coupled via a rotary mechanism of the central stalk subunits to proton translocation. Subunits alpha and beta form the catalytic core in F(1). Rotation of the central stalk against the surrounding alpha(3)beta(3) subunits leads to hydrolysis of ATP in three separate catalytic sites on the beta subunits. The sequence is that of ATP synthase subunit beta-3, mitochondrial from Arabidopsis thaliana (Mouse-ear cress).